Consider the following 208-residue polypeptide: Protein-L-isoaspartate O-methyltransferase (208 aa).

Serine 59 is a catalytic residue.

The protein belongs to the methyltransferase superfamily. L-isoaspartyl/D-aspartyl protein methyltransferase family.

The protein localises to the cytoplasm. The catalysed reaction is [protein]-L-isoaspartate + S-adenosyl-L-methionine = [protein]-L-isoaspartate alpha-methyl ester + S-adenosyl-L-homocysteine. In terms of biological role, catalyzes the methyl esterification of L-isoaspartyl residues in peptides and proteins that result from spontaneous decomposition of normal L-aspartyl and L-asparaginyl residues. It plays a role in the repair and/or degradation of damaged proteins. The protein is Protein-L-isoaspartate O-methyltransferase of Aliivibrio fischeri (strain MJ11) (Vibrio fischeri).